We begin with the raw amino-acid sequence, 196 residues long: Molybdopterin synthase catalytic subunit (196 aa).

The disordered stretch occupies residues 1-29 (MSTLPSTDPPPLPASTSSQQPAVHIPPPS). Substrate contacts are provided by residues 145-146 (HR), lysine 161, and 168-170 (KRE). Positions 174–196 (GEPPGQGEWRANRDTDPEGKSTS) are disordered. The segment covering 183-196 (RANRDTDPEGKSTS) has biased composition (basic and acidic residues).

Belongs to the MoaE family. MOCS2B subfamily. In terms of assembly, heterotetramer; composed of 2 small (MOCS2A) and 2 large (MOCS2B) subunits.

The protein resides in the cytoplasm. The catalysed reaction is 2 [molybdopterin-synthase sulfur-carrier protein]-C-terminal-Gly-aminoethanethioate + cyclic pyranopterin phosphate + H2O = molybdopterin + 2 [molybdopterin-synthase sulfur-carrier protein]-C-terminal Gly-Gly + 2 H(+). It participates in cofactor biosynthesis; molybdopterin biosynthesis. Catalytic subunit of the molybdopterin synthase complex, a complex that catalyzes the conversion of precursor Z into molybdopterin. Acts by mediating the incorporation of 2 sulfur atoms from thiocarboxylated MOCS2A into precursor Z to generate a dithiolene group. This is Molybdopterin synthase catalytic subunit from Coccidioides immitis (strain RS) (Valley fever fungus).